A 406-amino-acid chain; its full sequence is Glucose-1-phosphate adenylyltransferase (406 aa).

Alpha-D-glucose 1-phosphate-binding positions include Y100, G165, 181-182, and S199; that span reads EK.

The protein belongs to the bacterial/plant glucose-1-phosphate adenylyltransferase family. As to quaternary structure, homotetramer.

It catalyses the reaction alpha-D-glucose 1-phosphate + ATP + H(+) = ADP-alpha-D-glucose + diphosphate. It functions in the pathway glycan biosynthesis; glycogen biosynthesis. Functionally, involved in the biosynthesis of ADP-glucose, a building block required for the elongation reactions to produce glycogen. Catalyzes the reaction between ATP and alpha-D-glucose 1-phosphate (G1P) to produce pyrophosphate and ADP-Glc. This chain is Glucose-1-phosphate adenylyltransferase, found in Streptomyces avermitilis (strain ATCC 31267 / DSM 46492 / JCM 5070 / NBRC 14893 / NCIMB 12804 / NRRL 8165 / MA-4680).